A 154-amino-acid chain; its full sequence is UPF0178 protein Sala_2376 (154 aa).

Belongs to the UPF0178 family.

This Sphingopyxis alaskensis (strain DSM 13593 / LMG 18877 / RB2256) (Sphingomonas alaskensis) protein is UPF0178 protein Sala_2376.